We begin with the raw amino-acid sequence, 351 residues long: N-terminal EF-hand calcium-binding protein 1 (351 aa).

At serine 4 the chain carries Phosphoserine. EF-hand domains are found at residues 26–61 (KGMSIFLDILRRADKNDDGKLSFEEFKAYFADGVLS) and 60–95 (LSGEELHELFHTIDTHNTNNLDTEELCEYFSQHLGE). Residues aspartate 39, asparagine 41, aspartate 43, lysine 45, and glutamate 50 each coordinate Ca(2+). A coiled-coil region spans residues 135 to 163 (LLKETLNQLQSLQNSLECAMETTEEQTRQ). The segment at 180 to 203 (GKRSSRRVQRHNSFSPNSPQFNVS) is disordered. Positions 190-202 (HNSFSPNSPQFNV) are enriched in polar residues. Serine 192 and serine 197 each carry phosphoserine. Residues 209-275 (EEDNQWMTQI…EEFQLALKHY (67 aa)) are a coiled coil. The region spanning 252–340 (MLVQRQMSVI…LETPELTSTM (89 aa)) is the ABM domain.

In terms of assembly, interacts with STX1. May interact with CPNE6. As to expression, expressed in brain (at protein level).

Its subcellular location is the cytoplasm. In Homo sapiens (Human), this protein is N-terminal EF-hand calcium-binding protein 1 (NECAB1).